Consider the following 552-residue polypeptide: uncharacterized protein (552 aa).

In terms of domain architecture, DhaL spans 8–200 (KLFADMIIQG…LLCVYEGFLK (193 aa)).

This is an uncharacterized protein from Staphylococcus haemolyticus (strain JCSC1435).